Consider the following 420-residue polypeptide: Probable serine hydroxymethyltransferase (420 aa).

(6S)-5,6,7,8-tetrahydrofolate contacts are provided by residues leucine 121 and 125 to 127 (GHL). Lysine 230 is subject to N6-(pyridoxal phosphate)lysine. Residues glutamate 246 and 354–356 (SPF) contribute to the (6S)-5,6,7,8-tetrahydrofolate site.

It belongs to the SHMT family. In terms of assembly, homodimer. Requires pyridoxal 5'-phosphate as cofactor.

Its subcellular location is the cytoplasm. The enzyme catalyses (6R)-5,10-methylene-5,6,7,8-tetrahydrofolate + glycine + H2O = (6S)-5,6,7,8-tetrahydrofolate + L-serine. The protein operates within one-carbon metabolism; tetrahydrofolate interconversion. Catalyzes the reversible interconversion of serine and glycine with tetrahydrofolate (THF) serving as the one-carbon carrier. This reaction serves as the major source of one-carbon groups required for the biosynthesis of purines, thymidylate, methionine, and other important biomolecules. This is Probable serine hydroxymethyltransferase from Rickettsia bellii (strain RML369-C).